The sequence spans 151 residues: Small ribosomal subunit protein bS6 (151 aa).

Positions 97-151 (EAEPSAMMQKRDRDDRKDRDRGDRPRRRDDDFGGGDRGDRGDRGDRPERNFGGEN) are disordered. Positions 105-151 (QKRDRDDRKDRDRGDRPRRRDDDFGGGDRGDRGDRGDRPERNFGGEN) are enriched in basic and acidic residues.

It belongs to the bacterial ribosomal protein bS6 family.

Its function is as follows. Binds together with bS18 to 16S ribosomal RNA. In Methylorubrum populi (strain ATCC BAA-705 / NCIMB 13946 / BJ001) (Methylobacterium populi), this protein is Small ribosomal subunit protein bS6.